The chain runs to 591 residues: Myelin expression factor 2 (591 aa).

The tract at residues 1–92 (MADADKSEAA…GEKKGPNRNR (92 aa)) is disordered. Residues 22–36 (EPRRDTHPGEPEKPP) are compositionally biased toward basic and acidic residues. A Glycyl lysine isopeptide (Lys-Gly) (interchain with G-Cter in SUMO2) cross-link involves residue K44. 2 stretches are compositionally biased toward basic and acidic residues: residues 45–63 (MEND…EKST) and 74–87 (YSKD…EKKG). 2 consecutive RRM domains span residues 91 to 169 (NRVF…EDPD) and 224 to 301 (STIF…MDDK). Omega-N-methylarginine occurs at positions 397 and 417. At S422 the chain carries Phosphoserine. In terms of domain architecture, RRM 3 spans 514-590 (NQIFVRNLPF…REIDVRLDRN (77 aa)).

As to quaternary structure, monomer. Highly expressed in the brain.

It is found in the nucleus. Its function is as follows. Transcriptional repressor of the myelin basic protein gene (MBP). Binds to the proximal MB1 element 5'-TTGTCC-3' of the MBP promoter. Its binding to MB1 and function are inhibited by PURA. This is Myelin expression factor 2 (Myef2) from Mus musculus (Mouse).